Consider the following 120-residue polypeptide: NAD(P)H-quinone oxidoreductase subunit 3, chloroplastic (120 aa).

The next 3 membrane-spanning stretches (helical) occupy residues 7 to 27 (YDSF…AFSI), 63 to 83 (YMFA…YPWA), and 89 to 109 (LGLF…VGLV).

Belongs to the complex I subunit 3 family. As to quaternary structure, NDH is composed of at least 16 different subunits, 5 of which are encoded in the nucleus.

Its subcellular location is the plastid. The protein resides in the chloroplast thylakoid membrane. The enzyme catalyses a plastoquinone + NADH + (n+1) H(+)(in) = a plastoquinol + NAD(+) + n H(+)(out). The catalysed reaction is a plastoquinone + NADPH + (n+1) H(+)(in) = a plastoquinol + NADP(+) + n H(+)(out). Functionally, NDH shuttles electrons from NAD(P)H:plastoquinone, via FMN and iron-sulfur (Fe-S) centers, to quinones in the photosynthetic chain and possibly in a chloroplast respiratory chain. The immediate electron acceptor for the enzyme in this species is believed to be plastoquinone. Couples the redox reaction to proton translocation, and thus conserves the redox energy in a proton gradient. This chain is NAD(P)H-quinone oxidoreductase subunit 3, chloroplastic, found in Adiantum capillus-veneris (Maidenhair fern).